The sequence spans 296 residues: Homoserine kinase (296 aa).

Position 85 to 95 (85 to 95 (PLSRGLGSSAA)) interacts with ATP.

Belongs to the GHMP kinase family. Homoserine kinase subfamily.

Its subcellular location is the cytoplasm. It carries out the reaction L-homoserine + ATP = O-phospho-L-homoserine + ADP + H(+). Its pathway is amino-acid biosynthesis; L-threonine biosynthesis; L-threonine from L-aspartate: step 4/5. Catalyzes the ATP-dependent phosphorylation of L-homoserine to L-homoserine phosphate. This is Homoserine kinase from Clostridium acetobutylicum (strain ATCC 824 / DSM 792 / JCM 1419 / IAM 19013 / LMG 5710 / NBRC 13948 / NRRL B-527 / VKM B-1787 / 2291 / W).